Reading from the N-terminus, the 691-residue chain is Transcription termination factor Rho (691 aa).

The disordered stretch occupies residues 48–303 (ISDHQRGGSV…PEVDETELTE (256 aa)). The span at 50 to 64 (DHQRGGSVADRDAAE) shows a compositional bias: basic and acidic residues. Low complexity-rich tracts occupy residues 65–92 (RAAQ…PAAE) and 105–119 (DTSA…QPQA). 2 stretches are compositionally biased toward basic and acidic residues: residues 120-158 (EARE…SERR) and 188-273 (DADR…EGGR). In terms of domain architecture, Rho RNA-BD spans 307 to 390 (LQPVAGILDV…VKISSVNGQP (84 aa)). ATP-binding positions include 433 to 438 (GKGQRG), 445 to 450 (KAGKTM), and Arg-476.

This sequence belongs to the Rho family. As to quaternary structure, homohexamer. The homohexamer assembles into an open ring structure.

Its function is as follows. Facilitates transcription termination by a mechanism that involves Rho binding to the nascent RNA, activation of Rho's RNA-dependent ATPase activity, and release of the mRNA from the DNA template. This Micrococcus luteus (Micrococcus lysodeikticus) protein is Transcription termination factor Rho.